A 329-amino-acid polypeptide reads, in one-letter code: Replication factor C small subunit 1 (329 aa).

Residue 44-51 (GPPGTGKT) participates in ATP binding.

This sequence belongs to the activator 1 small subunits family. RfcS subfamily. As to quaternary structure, heteromultimer composed of small subunits (RfcS) and large subunits (RfcL).

Its function is as follows. Part of the RFC clamp loader complex which loads the PCNA sliding clamp onto DNA. The polypeptide is Replication factor C small subunit 1 (Pyrobaculum arsenaticum (strain DSM 13514 / JCM 11321 / PZ6)).